We begin with the raw amino-acid sequence, 369 residues long: LIM homeobox transcription factor 1-beta (369 aa).

2 consecutive LIM zinc-binding domains span residues 23-73 and 82-135; these read CEGC…CKQD and CSGC…CKGD. Residues 143–196 form a disordered region; the sequence is LSSVSPDESDSVKSEDEDGDMKPAKGQGSQSKGGGDDGKDPRRPKRPRTILTTQ. Positions 186–245 form a DNA-binding region, homeobox; that stretch reads PKRPRTILTTQQRRAFKASFEVSSKPCRKVRETLAAETGLSVRVVQVWFQNQRAKMKKLA.

Interacts with DHX9.

Its subcellular location is the nucleus. Functionally, transcription factor involved in the regulation of podocyte-expressed genes. Essential for the specification of dorsal limb fate at both the zeugopodal and autopodal levels. In Mesocricetus auratus (Golden hamster), this protein is LIM homeobox transcription factor 1-beta (LMX1B).